The following is a 380-amino-acid chain: Chaperone protein DnaJ (380 aa).

Positions 5-70 (DFYETLGVSK…QKRAAYDRFG (66 aa)) constitute a J domain. The segment at 141 to 219 (GKTAQIRVPT…CHGQGRVTEE (79 aa)) adopts a CR-type zinc-finger fold. Residues C154, C157, C171, C174, C193, C196, C207, and C210 each contribute to the Zn(2+) site. 4 CXXCXGXG motif repeats span residues 154 to 161 (CEVCSGSG), 171 to 178 (CATCQGSG), 193 to 200 (CPTCQGRG), and 207 to 214 (CGKCHGQG).

The protein belongs to the DnaJ family. In terms of assembly, homodimer. The cofactor is Zn(2+).

It is found in the cytoplasm. Functionally, participates actively in the response to hyperosmotic and heat shock by preventing the aggregation of stress-denatured proteins and by disaggregating proteins, also in an autonomous, DnaK-independent fashion. Unfolded proteins bind initially to DnaJ; upon interaction with the DnaJ-bound protein, DnaK hydrolyzes its bound ATP, resulting in the formation of a stable complex. GrpE releases ADP from DnaK; ATP binding to DnaK triggers the release of the substrate protein, thus completing the reaction cycle. Several rounds of ATP-dependent interactions between DnaJ, DnaK and GrpE are required for fully efficient folding. Also involved, together with DnaK and GrpE, in the DNA replication of plasmids through activation of initiation proteins. The polypeptide is Chaperone protein DnaJ (Allorhizobium ampelinum (strain ATCC BAA-846 / DSM 112012 / S4) (Agrobacterium vitis (strain S4))).